The sequence spans 407 residues: Inactive non-canonical poly(A) RNA polymerase protein Trf4-2 (407 aa).

Residues Asp-85 and Asp-87 each contribute to the Mg(2+) site. A PAP-associated domain is found at 221-280 (LALLLIQFLDYYGRKFDFFKYGISVLGQGGCVEKARLRSTLGENNWQSVLCIEDPVTPTN). Positions 354–390 (LVQPSPTGSTSPSASASASEDERSGGPATIGFGRCDD) are disordered. A compositionally biased stretch (low complexity) spans 357–371 (PSPTGSTSPSASASA).

It belongs to the DNA polymerase type-B-like family.

This is Inactive non-canonical poly(A) RNA polymerase protein Trf4-2 from Drosophila melanogaster (Fruit fly).